Consider the following 151-residue polypeptide: MAERTFIAIKPDGVQRGLVGEILGRFERKGFKLVGLKQITPSRALAEQHYGVHKERPFFAGLVDFITSGPVVAMVWEGDGVIASARKLIGATKPLEAEPGTIRGDLAVNIGRNVIHGSDAAETAQFEIGLWFQASELNDWSPSDQGWRVEG.

The ATP site is built by K10, F58, R86, T92, R103, and N113. H116 functions as the Pros-phosphohistidine intermediate in the catalytic mechanism.

This sequence belongs to the NDK family. As to quaternary structure, homotetramer. The cofactor is Mg(2+).

The protein localises to the cytoplasm. It carries out the reaction dZDP + ATP = dZTP + ADP. It catalyses the reaction a 2'-deoxyribonucleoside 5'-diphosphate + ATP = a 2'-deoxyribonucleoside 5'-triphosphate + ADP. The catalysed reaction is a ribonucleoside 5'-diphosphate + ATP = a ribonucleoside 5'-triphosphate + ADP. It functions in the pathway purine metabolism. In terms of biological role, major role in the synthesis of nucleoside triphosphates other than ATP. The ATP gamma phosphate is transferred to the NDP beta phosphate via a ping-pong mechanism, using a phosphorylated active-site intermediate. Its function is as follows. (Microbial infection) Catalyzes the phosphorylation of dZDP to dZTP, when the bacterium is infected by a phage that produces the substrate for the synthesis of dZTP (2- amino-2'-deoxyadenosine 5'-triphosphate), which is then used by the phage as a DNA polymerase substrate. The polypeptide is Nucleoside diphosphate kinase (Synechococcus sp. (strain CC9605)).